We begin with the raw amino-acid sequence, 529 residues long: MTLSPYLQEVAKRRTFAIISHPDAGKTTITEKVLLFGQAIQTAGTVKGRGSSQHAKSDWMEMEKQRGISITTSVMQFPYHDCLVNLLDTPGHEDFSEDTYRTLTAVDCCLMVIDAAKGVEDRTRKLMEVTRLRDTPILTFMNKLDRDIRDPMELLDEVENELKIGCAPITWPIGCGKLFKGVYHLYKDETYLYQTGKGHTIQEVRIVKGLNNPDLDAAVGEDLAQQLRDELELVQGASNEFDEELFLAGEITPVFFGTALGNFGVDHMLDGLVAWAPAPMPRQTDTRTVEASEERFTGFVFKIQANMDPKHRDRVAFMRVVSGKYEKGMKLRQVRTGKDVVISDALTFMAGDRSHVEEAYPGDILGLHNHGTIQIGDTFTQGEMMKFTGIPNFAPELFRRIRLKDPLKQKQLLKGLVQLSEEGAVQVFRPISNNDLIVGAVGVLQFDVVVARLKSEYNVEAIYESVNVATARWVESADAKKFEEFKRKNETQLALDGGDNLTYIAPTMVNLNLTQERYPDVQFRKTREH.

The tr-type G domain occupies 11 to 280 (AKRRTFAIIS…GLVAWAPAPM (270 aa)). GTP contacts are provided by residues 20 to 27 (SHPDAGKT), 88 to 92 (DTPGH), and 142 to 145 (NKLD).

Belongs to the TRAFAC class translation factor GTPase superfamily. Classic translation factor GTPase family. PrfC subfamily.

It localises to the cytoplasm. Functionally, increases the formation of ribosomal termination complexes and stimulates activities of RF-1 and RF-2. It binds guanine nucleotides and has strong preference for UGA stop codons. It may interact directly with the ribosome. The stimulation of RF-1 and RF-2 is significantly reduced by GTP and GDP, but not by GMP. This chain is Peptide chain release factor 3 (prfC), found in Salmonella typhi.